We begin with the raw amino-acid sequence, 347 residues long: N-acetyl-gamma-glutamyl-phosphate reductase (347 aa).

Residue cysteine 155 is part of the active site.

The protein belongs to the NAGSA dehydrogenase family. Type 1 subfamily.

The protein localises to the cytoplasm. The enzyme catalyses N-acetyl-L-glutamate 5-semialdehyde + phosphate + NADP(+) = N-acetyl-L-glutamyl 5-phosphate + NADPH + H(+). It functions in the pathway amino-acid biosynthesis; L-arginine biosynthesis; N(2)-acetyl-L-ornithine from L-glutamate: step 3/4. In terms of biological role, catalyzes the NADPH-dependent reduction of N-acetyl-5-glutamyl phosphate to yield N-acetyl-L-glutamate 5-semialdehyde. In Akkermansia muciniphila (strain ATCC BAA-835 / DSM 22959 / JCM 33894 / BCRC 81048 / CCUG 64013 / CIP 107961 / Muc), this protein is N-acetyl-gamma-glutamyl-phosphate reductase.